Reading from the N-terminus, the 186-residue chain is Bis(5'-nucleosyl)-tetraphosphatase, symmetrical (186 aa).

One can recognise an HD domain in the interval 18-132 (RYIHTVGVMN…IYVADYIEPN (115 aa)). H21 is an ADP binding site. Positions 21, 50, and 51 each coordinate Fe cation. ADP contacts are provided by residues 51–54 (DYAK), H83, 109–110 (HT), D127, R133, and 170–175 (PVFPDT). D127 provides a ligand contact to Fe cation.

Belongs to the Ap4A hydrolase YqeK family. In terms of assembly, homodimer.

It catalyses the reaction P(1),P(4)-bis(5'-adenosyl) tetraphosphate + H2O = 2 ADP + 2 H(+). Its function is as follows. Hydrolyzes diadenosine 5',5'''-P1,P4-tetraphosphate (Ap4A) to yield ADP. The protein is Bis(5'-nucleosyl)-tetraphosphatase, symmetrical (yqeK) of Bacillus subtilis (strain 168).